A 621-amino-acid polypeptide reads, in one-letter code: Hemolysin ahh1 (621 aa).

An N-terminal signal peptide occupies residues 1–30 (MKNKKPRKFITQAPTLSLLALALLAGSVQA). One can recognise a Ricin B-type lectin domain in the interval 491-610 (RPVNLQLGGF…QNVSVRTLTS (120 aa)).

It belongs to the HlyA hemolysin family.

In terms of biological role, bacterial hemolysins are exotoxins that attack blood cell membranes and cause cell rupture by mechanisms not clearly defined. The protein is Hemolysin ahh1 (ahh1) of Aeromonas hydrophila subsp. hydrophila (strain ATCC 7966 / DSM 30187 / BCRC 13018 / CCUG 14551 / JCM 1027 / KCTC 2358 / NCIMB 9240 / NCTC 8049).